The primary structure comprises 1117 residues: DNA-directed RNA polymerase subunit beta (1117 aa).

The segment at 1094–1117 (QLARRTPPRPTYESLSRESLDDDE) is disordered. Residues 1108–1117 (LSRESLDDDE) are compositionally biased toward basic and acidic residues.

Belongs to the RNA polymerase beta chain family. In terms of assembly, in cyanobacteria the RNAP catalytic core is composed of 2 alpha, 1 beta, 1 beta', 1 gamma and 1 omega subunit. When a sigma factor is associated with the core the holoenzyme is formed, which can initiate transcription.

The catalysed reaction is RNA(n) + a ribonucleoside 5'-triphosphate = RNA(n+1) + diphosphate. Functionally, DNA-dependent RNA polymerase catalyzes the transcription of DNA into RNA using the four ribonucleoside triphosphates as substrates. The protein is DNA-directed RNA polymerase subunit beta of Trichormus variabilis (strain ATCC 29413 / PCC 7937) (Anabaena variabilis).